We begin with the raw amino-acid sequence, 132 residues long: Small ribosomal subunit protein uS8 (132 aa).

It belongs to the universal ribosomal protein uS8 family. As to quaternary structure, part of the 30S ribosomal subunit. Contacts proteins S5 and S12.

Functionally, one of the primary rRNA binding proteins, it binds directly to 16S rRNA central domain where it helps coordinate assembly of the platform of the 30S subunit. The sequence is that of Small ribosomal subunit protein uS8 from Rhodopseudomonas palustris (strain BisB18).